A 400-amino-acid chain; its full sequence is Subtilisin-like protease 7 (400 aa).

A signal peptide spans Met-1–Gly-20. Residues Ala-21–Asn-119 constitute a propeptide that is removed on maturation. An Inhibitor I9 domain is found at Lys-36–Ile-118. Residues Ser-129 to Met-400 enclose the Peptidase S8 domain. Active-site charge relay system residues include Asp-161 and His-192. N-linked (GlcNAc...) asparagine glycans are attached at residues Asn-222 and Asn-252. Ser-346 functions as the Charge relay system in the catalytic mechanism. The N-linked (GlcNAc...) asparagine glycan is linked to Asn-396.

This sequence belongs to the peptidase S8 family.

It localises to the secreted. Secreted subtilisin-like serine protease with keratinolytic activity that contributes to pathogenicity. This is Subtilisin-like protease 7 (SUB7) from Trichophyton soudanense.